We begin with the raw amino-acid sequence, 387 residues long: G2/mitotic-specific cyclin-B2 (387 aa).

It belongs to the cyclin family. Cyclin AB subfamily. Interacts with the CDK1 protein kinase to form a serine/threonine kinase holoenzyme complex also known as maturation promoting factor (MPF). The cyclin subunit imparts substrate specificity to the complex.

Functionally, essential for the control of the cell cycle at the G2/M (mitosis) transition. This Oryzias latipes (Japanese rice fish) protein is G2/mitotic-specific cyclin-B2 (ccnb2).